A 276-amino-acid chain; its full sequence is Ribosomal RNA small subunit methyltransferase A (276 aa).

S-adenosyl-L-methionine is bound by residues His-15, Leu-17, Gly-42, Glu-64, Asp-89, and Asn-108.

It belongs to the class I-like SAM-binding methyltransferase superfamily. rRNA adenine N(6)-methyltransferase family. RsmA subfamily.

The protein resides in the cytoplasm. It catalyses the reaction adenosine(1518)/adenosine(1519) in 16S rRNA + 4 S-adenosyl-L-methionine = N(6)-dimethyladenosine(1518)/N(6)-dimethyladenosine(1519) in 16S rRNA + 4 S-adenosyl-L-homocysteine + 4 H(+). Functionally, specifically dimethylates two adjacent adenosines (A1518 and A1519) in the loop of a conserved hairpin near the 3'-end of 16S rRNA in the 30S particle. May play a critical role in biogenesis of 30S subunits. This Prochlorococcus marinus (strain MIT 9312) protein is Ribosomal RNA small subunit methyltransferase A.